The chain runs to 733 residues: Methionine--tRNA ligase (733 aa).

The short motif at 11 to 21 is the 'HIGH' region element; that stretch reads PYANGPIHAGH. The Zn(2+) site is built by Cys143, Cys146, Cys156, and Cys159. The 'KMSKS' region signature appears at 345–349; it reads KFSTS. An ATP-binding site is contributed by Thr348. The tRNA-binding domain occupies 633 to 733; the sequence is DFMKLDLRVG…KEVKLGARIR (101 aa).

This sequence belongs to the class-I aminoacyl-tRNA synthetase family. MetG type 1 subfamily. In terms of assembly, homodimer. Zn(2+) is required as a cofactor.

The protein localises to the cytoplasm. The enzyme catalyses tRNA(Met) + L-methionine + ATP = L-methionyl-tRNA(Met) + AMP + diphosphate. Its function is as follows. Is required not only for elongation of protein synthesis but also for the initiation of all mRNA translation through initiator tRNA(fMet) aminoacylation. The polypeptide is Methionine--tRNA ligase (Thermococcus onnurineus (strain NA1)).